The sequence spans 194 residues: Protein GrpE 1 (194 aa).

The segment at 1–22 (MIHNEEEQLEKKIEKNQDPKIN) is disordered.

It belongs to the GrpE family. As to quaternary structure, homodimer.

Its subcellular location is the cytoplasm. Its function is as follows. Participates actively in the response to hyperosmotic and heat shock by preventing the aggregation of stress-denatured proteins, in association with DnaK and GrpE. It is the nucleotide exchange factor for DnaK and may function as a thermosensor. Unfolded proteins bind initially to DnaJ; upon interaction with the DnaJ-bound protein, DnaK hydrolyzes its bound ATP, resulting in the formation of a stable complex. GrpE releases ADP from DnaK; ATP binding to DnaK triggers the release of the substrate protein, thus completing the reaction cycle. Several rounds of ATP-dependent interactions between DnaJ, DnaK and GrpE are required for fully efficient folding. The sequence is that of Protein GrpE 1 from Buchnera aphidicola subsp. Acyrthosiphon pisum (strain APS) (Acyrthosiphon pisum symbiotic bacterium).